A 333-amino-acid chain; its full sequence is MFARDIGIDLGTANVLIHVKGKGIVLNEPSVVALDKNSGKVLAVGEEARRMVGRTPGNIVAIRPLKDGVIADFEVTEAMLKHFINKLNVKGLFSKPRMLICCPTNITSVEQKAIKEAAEKSGGKHVYLEEEPKVAAIGAGMEIFQPSGNMVVDIGGGTTDIAVISMGDIVTSSSIKMAGDKFDMEILNYIKREYKLLIGERTAEDIKIKVATVFPDARHEEISIRGRDMVSGLPRTITVNSKEVEEALRESVAVIVQAAKQVLERTPPELSADIIDRGVIITGGGALLNGLDQLLAEELKVPVLVAENPMDCVAIGTGVMLDNMDKLPKRKLS.

Residues 12–14 (TAN), 156–158 (GGT), 204–207 (EDIK), and 284–287 (GGAL) contribute to the ATP site.

The protein belongs to the FtsA/MreB family. As to quaternary structure, forms polymers. Forms a complex with MreB and MreBH. Interacts with MreC.

The protein resides in the cytoplasm. Its function is as follows. Forms membrane-associated dynamic filaments that are essential for cell shape determination. Acts by regulating cell wall synthesis and cell elongation, and thus cell shape. A feedback loop between cell geometry and Mbl localization may maintain elongated cell shape by targeting cell wall growth to regions of negative cell wall curvature. Filaments rotate around the cell circumference in concert with the cell wall synthesis enzymes. The process is driven by the cell wall synthesis machinery and does not depend on Mbl polymerization. Organizes peptidoglycan synthesis in the lateral cell wall. Also required for proper chromosome segregation. This chain is Cell shape-determining protein Mbl (mbl), found in Bacillus subtilis (strain 168).